The sequence spans 354 residues: Uroporphyrinogen decarboxylase (354 aa).

Residues 27–31 (RQAGR), Asp77, Tyr154, Ser209, and His327 each bind substrate.

Belongs to the uroporphyrinogen decarboxylase family. As to quaternary structure, homodimer.

Its subcellular location is the cytoplasm. It catalyses the reaction uroporphyrinogen III + 4 H(+) = coproporphyrinogen III + 4 CO2. It functions in the pathway porphyrin-containing compound metabolism; protoporphyrin-IX biosynthesis; coproporphyrinogen-III from 5-aminolevulinate: step 4/4. In terms of biological role, catalyzes the decarboxylation of four acetate groups of uroporphyrinogen-III to yield coproporphyrinogen-III. This chain is Uroporphyrinogen decarboxylase, found in Shewanella piezotolerans (strain WP3 / JCM 13877).